An 88-amino-acid polypeptide reads, in one-letter code: YcgL domain-containing protein NTHI1684 (88 aa).

Positions 1–85 constitute a YcgL domain; that stretch reads MLCAIYKSKK…QDDGLFNSLS (85 aa).

The protein is YcgL domain-containing protein NTHI1684 of Haemophilus influenzae (strain 86-028NP).